Consider the following 320-residue polypeptide: 3'-5' exoribonuclease YhaM (320 aa).

A DNA-binding region (OB) is located at residues 18 to 90 (FLIKSATKAV…QLKIGSIRPT (73 aa)). Residues 163–279 (HVVCMLNVAK…LHMIDNIDAK (117 aa)) enclose the HD domain.

Belongs to the YhaM family.

In terms of biological role, shows a 3'-5' exoribonuclease activity. The chain is 3'-5' exoribonuclease YhaM from Halalkalibacterium halodurans (strain ATCC BAA-125 / DSM 18197 / FERM 7344 / JCM 9153 / C-125) (Bacillus halodurans).